We begin with the raw amino-acid sequence, 408 residues long: Peptidase T (408 aa).

His78 is a Zn(2+) binding site. The active site involves Asp80. Asp140 contacts Zn(2+). Residue Glu174 is the Proton acceptor of the active site. 3 residues coordinate Zn(2+): Glu175, Asp197, and His379.

It belongs to the peptidase M20B family. The cofactor is Zn(2+).

It is found in the cytoplasm. It carries out the reaction Release of the N-terminal residue from a tripeptide.. Its function is as follows. Cleaves the N-terminal amino acid of tripeptides. The chain is Peptidase T from Staphylococcus aureus (strain bovine RF122 / ET3-1).